The primary structure comprises 296 residues: tRNA (guanine-N(7)-)-methyltransferase (296 aa).

The segment at 1–26 (MSKRTREESEMEAGPSTASPGVSVSP) is disordered. S-adenosyl-L-methionine-binding positions include Gly-101, 124–125 (EI), 168–169 (NS), and Leu-188. Asp-191 is a catalytic residue. 266–268 (TEE) contacts S-adenosyl-L-methionine.

The protein belongs to the class I-like SAM-binding methyltransferase superfamily. TrmB family. In terms of assembly, forms a complex with TRM82.

It is found in the nucleus. It carries out the reaction guanosine(46) in tRNA + S-adenosyl-L-methionine = N(7)-methylguanosine(46) in tRNA + S-adenosyl-L-homocysteine. It participates in tRNA modification; N(7)-methylguanine-tRNA biosynthesis. In terms of biological role, catalyzes the formation of N(7)-methylguanine at position 46 (m7G46) in tRNA. This is tRNA (guanine-N(7)-)-methyltransferase from Cryptococcus neoformans var. neoformans serotype D (strain JEC21 / ATCC MYA-565) (Filobasidiella neoformans).